The sequence spans 286 residues: Tyrosine recombinase Tlet_1492 (286 aa).

One can recognise a Core-binding (CB) domain in the interval Met1–Gln86. The 174-residue stretch at Arg107–Asn280 folds into the Tyr recombinase domain. Residues Arg143, Lys168, His232, Arg235, and His258 contribute to the active site. Tyr267 functions as the O-(3'-phospho-DNA)-tyrosine intermediate in the catalytic mechanism.

This sequence belongs to the 'phage' integrase family.

The protein resides in the cytoplasm. Its function is as follows. Site-specific tyrosine recombinase, which acts by catalyzing the cutting and rejoining of the recombining DNA molecules. The sequence is that of Tyrosine recombinase Tlet_1492 from Pseudothermotoga lettingae (strain ATCC BAA-301 / DSM 14385 / NBRC 107922 / TMO) (Thermotoga lettingae).